The chain runs to 332 residues: UPF0194 membrane protein YbhG (332 aa).

An N-terminal signal peptide occupies residues M1–Y26. Positions E108–A209 form a coiled coil.

This sequence belongs to the UPF0194 family.

Its subcellular location is the periplasm. The polypeptide is UPF0194 membrane protein YbhG (ybhG) (Shigella sonnei (strain Ss046)).